We begin with the raw amino-acid sequence, 260 residues long: CD40 ligand (260 aa).

Residues 1–22 (MIETYSQTAPRSVATGPPVSMK) are Cytoplasmic-facing. The helical; Signal-anchor for type II membrane protein transmembrane segment at 23–46 (IFMYLLTVFLITQMIGSALFAVYL) threads the bilayer. At 47–260 (HRRLDKIEDE…GFTSFGLLKL (214 aa)) the chain is on the extracellular side. In terms of domain architecture, THD spans 121–260 (IAAHVISEAS…GFTSFGLLKL (140 aa)). The cysteines at positions 177 and 217 are disulfide-linked. Asparagine 239 carries N-linked (GlcNAc...) asparagine glycosylation.

Belongs to the tumor necrosis factor family. As to quaternary structure, homotrimer. Interacts with CD28. CD40 ligand, soluble form: Exists as either a monomer or a homotrimer. Forms a ternary complex between CD40 and integrins for CD40-CD40LG signaling. In terms of processing, the soluble form derives from the membrane form by proteolytic processing.

The protein resides in the cell membrane. The protein localises to the cell surface. It is found in the secreted. In terms of biological role, cytokine that acts as a ligand to CD40/TNFRSF5. Costimulates T-cell proliferation and cytokine production. Its cross-linking on T-cells generates a costimulatory signal which enhances the production of IL4 and IL10 in conjunction with the TCR/CD3 ligation and CD28 costimulation. Induces the activation of NF-kappa-B. Induces the activation of kinases MAPK8 and PAK2 in T-cells. Mediates B-cell proliferation in the absence of co-stimulus as well as IgE production in the presence of IL4. Involved in immunoglobulin class switching. Acts as a ligand for integrins, specifically ITGA5:ITGB1 and ITGAV:ITGB3; both integrins and the CD40 receptor are required for activation of CD40-CD40LG signaling, which have cell-type dependent effects, such as B-cell activation, NF-kappa-B signaling and anti-apoptotic signaling. In Canis lupus familiaris (Dog), this protein is CD40 ligand (CD40LG).